The sequence spans 361 residues: Homocitrate synthase (361 aa).

A Pyruvate carboxyltransferase domain is found at 1-249 (MILDSTLREG…VKKYRLDKLY (249 aa)). Arginine 8 is a 2-oxoglutarate binding site. Glutamate 9 is a binding site for Mg(2+). 3 residues coordinate 2-oxoglutarate: histidine 68, arginine 128, and threonine 162. 2 residues coordinate Mg(2+): histidine 188 and histidine 190. Catalysis depends on histidine 282, which acts as the Proton acceptor.

The protein belongs to the alpha-IPM synthase/homocitrate synthase family. Homocitrate synthase LYS20/LYS21 subfamily. Mg(2+) is required as a cofactor. The cofactor is Mn(2+).

It carries out the reaction acetyl-CoA + 2-oxoglutarate + H2O = (2R)-homocitrate + CoA + H(+). It functions in the pathway amino-acid biosynthesis; L-lysine biosynthesis via AAA pathway; L-alpha-aminoadipate from 2-oxoglutarate: step 1/5. Functionally, catalyzes the aldol-type condensation of 2-oxoglutarate with acetyl-CoA to yield homocitrate. Carries out the first step of the alpha-aminoadipate (AAA) lysine biosynthesis pathway. The protein is Homocitrate synthase of Pyrococcus horikoshii (strain ATCC 700860 / DSM 12428 / JCM 9974 / NBRC 100139 / OT-3).